Consider the following 338-residue polypeptide: Ketol-acid reductoisomerase (NADP(+)) (338 aa).

A KARI N-terminal Rossmann domain is found at 1-181 (MKVFYDKDAD…GGGRAGIIET (181 aa)). Residues 24–27 (YGSQ), Arg-47, and Ser-52 contribute to the NADP(+) site. His-107 is a catalytic residue. NADP(+) is bound at residue Gly-133. The KARI C-terminal knotted domain occupies 182-327 (NFREETETDL…AKLRAMMPWI (146 aa)). The Mg(2+) site is built by Asp-190, Glu-194, Glu-226, and Glu-230. Ser-251 is a substrate binding site.

This sequence belongs to the ketol-acid reductoisomerase family. Requires Mg(2+) as cofactor.

It catalyses the reaction (2R)-2,3-dihydroxy-3-methylbutanoate + NADP(+) = (2S)-2-acetolactate + NADPH + H(+). It carries out the reaction (2R,3R)-2,3-dihydroxy-3-methylpentanoate + NADP(+) = (S)-2-ethyl-2-hydroxy-3-oxobutanoate + NADPH + H(+). Its pathway is amino-acid biosynthesis; L-isoleucine biosynthesis; L-isoleucine from 2-oxobutanoate: step 2/4. It participates in amino-acid biosynthesis; L-valine biosynthesis; L-valine from pyruvate: step 2/4. In terms of biological role, involved in the biosynthesis of branched-chain amino acids (BCAA). Catalyzes an alkyl-migration followed by a ketol-acid reduction of (S)-2-acetolactate (S2AL) to yield (R)-2,3-dihydroxy-isovalerate. In the isomerase reaction, S2AL is rearranged via a Mg-dependent methyl migration to produce 3-hydroxy-3-methyl-2-ketobutyrate (HMKB). In the reductase reaction, this 2-ketoacid undergoes a metal-dependent reduction by NADPH to yield (R)-2,3-dihydroxy-isovalerate. In Polynucleobacter necessarius subsp. necessarius (strain STIR1), this protein is Ketol-acid reductoisomerase (NADP(+)).